The sequence spans 316 residues: MLSESSSFLKGVMLGSIFCALITMLGHIRIGNRMHHHEHHHLQAPNKDDISKISEAERMELSKSFRVYCIVLVKPKDVSLWAAVKETWTKHCDKAEFFSSENVKVFESINMDTNDMWLMMRKAYKYAYDQYRDQYNWFFLARPTTFAVIENLKYFLLKKDQSQPFYLGHTVKSGDLEYVSVDGGIVLSIESMKRLNSLLSVPEKCPEQGGMIWKISEDKQLAVCLKYAGVFAENAEDADGKDVFNTKSVGLFIKEAMTNQPNQVVEGCCSDMAVTFNGLTPNQMHVMMYGVYRLRAFGHVFNDALVFLPPNGSEND.

At 1–6 (MLSESS) the chain is on the cytoplasmic side. A helical; Signal-anchor for type II membrane protein membrane pass occupies residues 7–26 (SFLKGVMLGSIFCALITMLG). Residues 27-316 (HIRIGNRMHH…FLPPNGSEND (290 aa)) are Lumenal-facing.

The protein belongs to the glycosyltransferase 31 family. Beta3-Gal-T subfamily. In terms of assembly, associates with core 1 beta-3-galactosyltransferase (C1GALT1), probably not with the soluble active form.

It is found in the membrane. In terms of biological role, probable chaperone required for the generation of 1 O-glycan Gal-beta1-3GalNAc-alpha1-Ser/Thr (T antigen), which is a precursor for many extended O-glycans in glycoproteins. Probably acts as a specific molecular chaperone assisting the folding/stability of core 1 beta-3-galactosyltransferase (C1GALT1). The polypeptide is C1GALT1-specific chaperone 1 (C1galt1c1) (Mus musculus (Mouse)).